The primary structure comprises 2310 residues: Peroxide stress-activated histidine kinase mak2 (2310 aa).

One can recognise a Protein kinase domain in the interval 12-292; sequence DYAISQLGEF…SATDLCYTIV (281 aa). A GAF domain is found at 1450–1592; it reads RLGPLLTTVI…LLSQQIAISV (143 aa). The 227-residue stretch at 1760–1986 folds into the Histidine kinase domain; the sequence is NMSHELRTPF…TFWFHVQLRN (227 aa). At His-1763 the chain carries Phosphohistidine; by autocatalysis. The Response regulatory domain maps to 2180-2303; the sequence is YALIAEDNLI…QLVNAVREFV (124 aa). Position 2232 is a 4-aspartylphosphate (Asp-2232).

It localises to the cytoplasm. The enzyme catalyses ATP + protein L-histidine = ADP + protein N-phospho-L-histidine.. Its function is as follows. Involved in the control of the SAPK-dependent transcriptional response to peroxide stress. Regulates sty1 activity. In Schizosaccharomyces pombe (strain 972 / ATCC 24843) (Fission yeast), this protein is Peroxide stress-activated histidine kinase mak2 (mak2).